The chain runs to 210 residues: Protein GrpE (210 aa).

Residues 1–12 show a composition bias toward basic and acidic residues; it reads MSDQAKDERAPS. Disordered stretches follow at residues 1 to 26 and 191 to 210; these read MSDQAKDERAPSEAEAAEANAERTEG and IAAEAPVEPGPVNEQAEKDA.

Belongs to the GrpE family. As to quaternary structure, homodimer.

Its subcellular location is the cytoplasm. In terms of biological role, participates actively in the response to hyperosmotic and heat shock by preventing the aggregation of stress-denatured proteins, in association with DnaK and GrpE. It is the nucleotide exchange factor for DnaK and may function as a thermosensor. Unfolded proteins bind initially to DnaJ; upon interaction with the DnaJ-bound protein, DnaK hydrolyzes its bound ATP, resulting in the formation of a stable complex. GrpE releases ADP from DnaK; ATP binding to DnaK triggers the release of the substrate protein, thus completing the reaction cycle. Several rounds of ATP-dependent interactions between DnaJ, DnaK and GrpE are required for fully efficient folding. This chain is Protein GrpE, found in Mesorhizobium japonicum (strain LMG 29417 / CECT 9101 / MAFF 303099) (Mesorhizobium loti (strain MAFF 303099)).